Consider the following 319-residue polypeptide: Ribonucleoside-diphosphate reductase small chain (319 aa).

Residues Asp-70, Glu-101, and His-104 each contribute to the Fe cation site. Tyr-108 is a catalytic residue. Fe cation is bound by residues Glu-163, Glu-197, and His-200. The tract at residues 313–319 (FSLDVDF) is interaction with R1.

It belongs to the ribonucleoside diphosphate reductase small chain family. As to quaternary structure, interacts with RNR1/OPG080 subunit. Can interact with host RNR1 supunit. Requires Fe cation as cofactor.

The catalysed reaction is a 2'-deoxyribonucleoside 5'-diphosphate + [thioredoxin]-disulfide + H2O = a ribonucleoside 5'-diphosphate + [thioredoxin]-dithiol. Ribonucleoside-diphosphate reductase holoenzyme provides the precursors necessary for viral DNA synthesis. Allows virus growth in non-dividing cells. Catalyzes the biosynthesis of deoxyribonucleotides from the corresponding ribonucleotides. The protein is Ribonucleoside-diphosphate reductase small chain (OPG048) of Vaccinia virus (strain L-IVP) (VACV).